A 22-amino-acid chain; its full sequence is Magnificalysin II (22 aa).

A plays an important role in the hemolytic activity region spans residues 3–12 (ALAGTIIDGA). The segment at 11–22 (GASLGFDILNKV) is N-terminal region.

Belongs to the actinoporin family. Sea anemone subfamily. In terms of assembly, octamer or nonamer in membranes. Monomer in the soluble state.

The protein localises to the secreted. It localises to the nematocyst. Its subcellular location is the target cell membrane. In terms of biological role, pore-forming protein that forms cations-selective hydrophilic pores of around 1 nm and causes cytolysis. Pore formation is a multi-step process that involves specific recognition of membrane sphingomyelin (but neither cholesterol nor phosphatidylcholine) using aromatic rich region and adjacent phosphocholine (POC) binding site, firm binding to the membrane (mainly driven by hydrophobic interactions) accompanied by the transfer of the N-terminal region to the lipid-water interface and finally pore formation after oligomerization of monomers. The polypeptide is Magnificalysin II (Heteractis magnifica (Magnificent sea anemone)).